The following is a 574-amino-acid chain: Septation ring formation regulator EzrA (574 aa).

At 1–7 (MPTGTII) the chain is on the extracellular side. Residues 8–26 (LIVSIVIILIIAYVACLIV) traverse the membrane as a helical segment. Residues 27-574 (RKRNDNLLVA…YEKTREAIRY (548 aa)) are Cytoplasmic-facing. A coiled-coil region spans residues 105 to 189 (SAKNAIDSID…IEVEFSEFVM (85 aa)).

The protein belongs to the EzrA family.

It localises to the cell membrane. Negative regulator of FtsZ ring formation; modulates the frequency and position of FtsZ ring formation. Inhibits FtsZ ring formation at polar sites. Interacts either with FtsZ or with one of its binding partners to promote depolymerization. The protein is Septation ring formation regulator EzrA of Streptococcus suis (strain 98HAH33).